Here is a 110-residue protein sequence, read N- to C-terminus: Insulin (110 aa).

A signal peptide spans Met1–Ala24. 3 disulfide bridges follow: Cys31–Cys96, Cys43–Cys109, and Cys95–Cys100. A propeptide spans Glu57 to Gln87 (c peptide).

It belongs to the insulin family. Heterodimer of a B chain and an A chain linked by two disulfide bonds.

It localises to the secreted. Its function is as follows. Insulin decreases blood glucose concentration. It increases cell permeability to monosaccharides, amino acids and fatty acids. It accelerates glycolysis, the pentose phosphate cycle, and glycogen synthesis in liver. The sequence is that of Insulin (INS) from Pan troglodytes (Chimpanzee).